The following is a 1220-amino-acid chain: Plasma membrane calcium-transporting ATPase 1 (1220 aa).

At glycine 2 the chain carries N-acetylglycine. The Cytoplasmic portion of the chain corresponds to 2 to 105; sequence GDMANNSVAY…KTFLQLVWEA (104 aa). Residues serine 8 and serine 17 each carry the phosphoserine modification. Residues 106–126 form a helical membrane-spanning segment; it reads LQDVTLIILEIAAIVSLGLSF. The Extracellular portion of the chain corresponds to 127 to 154; it reads YQPPEGDNALCGEVSVGEEEGEGETGWI. A helical transmembrane segment spans residues 155 to 175; the sequence is EGAAILLSVVCVVLVTAFNDW. Residues 176–366 lie on the Cytoplasmic side of the membrane; sequence SKEKQFRGLQ…KEKSVLQGKL (191 aa). Positions 297 to 356 are disordered; that stretch reads EEEKKDEKKKEKKNKKQDGAIENRNKAKAQDGAAMEMQPLKSEEGGDGDEKDKKKANLPK. 2 stretches are compositionally biased toward basic and acidic residues: residues 312–325 and 337–356; these read KQDGAIENRNKAKA and KSEEGGDGDEKDKKKANLPK. The residue at position 338 (serine 338) is a Phosphoserine. A helical membrane pass occupies residues 367-386; that stretch reads TKLAVQIGKAGLLMSAITVI. Topologically, residues 387-418 are extracellular; sequence ILVLYFVIDTFWVQKRPWLAECTPIYIQYFVK. A helical transmembrane segment spans residues 419–439; it reads FFIIGVTVLVVAVPEGLPLAV. The Cytoplasmic segment spans residues 440–855; sequence TISLAYSVKK…RNVYDSISKF (416 aa). Aspartate 475 (4-aspartylphosphate intermediate) is an active-site residue. Residues aspartate 475, threonine 477, and aspartate 797 each coordinate Mg(2+). Residues 856–876 traverse the membrane as a helical segment; it reads LQFQLTVNVVAVIVAFTGACI. Topologically, residues 877–882 are extracellular; sequence TQDSPL. The chain crosses the membrane as a helical span at residues 883–903; that stretch reads KAVQMLWVNLIMDTLASLALA. The Cytoplasmic portion of the chain corresponds to 904–927; it reads TEPPTESLLLRKPYGRNKPLISRT. The chain crosses the membrane as a helical span at residues 928-948; sequence MMKNILGHAFYQLVVVFTLLF. The Extracellular segment spans residues 949-971; it reads AGEKFFDIDSGRNAPLHAPPSEH. The chain crosses the membrane as a helical span at residues 972–991; that stretch reads YTIVFNTFVLMQLFNEINAR. The Cytoplasmic segment spans residues 992 to 1005; it reads KIHGERNVFEGIFN. The helical transmembrane segment at 1006 to 1027 threads the bilayer; that stretch reads NAIFCTIVLGTFVVQIIIVQFG. Over 1028–1039 the chain is Extracellular; it reads GKPFSCSELSIE. A helical membrane pass occupies residues 1040–1060; the sequence is QWLWSIFLGMGTLLWGQLIST. Over 1061–1220 the chain is Cytoplasmic; the sequence is IPTSRLKFLK…SPLHSLETSL (160 aa). A calmodulin-binding subdomain A region spans residues 1100–1117; that stretch reads LRRGQILWFRGLNRIQTQ. Position 1116 is a phosphothreonine; by PKC (threonine 1116). The required for basolateral membrane targeting stretch occupies residues 1118-1220; that stretch reads IRVVNAFRSS…SPLHSLETSL (103 aa). 2 positions are modified to phosphoserine: serine 1140 and serine 1155. The disordered stretch occupies residues 1162–1220; it reads IDDTDAEDDAPTKRNSSPPPSPNKNNNAVDSGIHLTIEMNKSATSSSPGSPLHSLETSL. Threonine 1165 is subject to Phosphothreonine. Serine 1177 is subject to Phosphoserine; by PKA. Residues serine 1178 and serine 1182 each carry the phosphoserine modification. The segment covering 1200–1220 has biased composition (polar residues); it reads MNKSATSSSPGSPLHSLETSL.

This sequence belongs to the cation transport ATPase (P-type) (TC 3.A.3) family. Type IIB subfamily. In terms of assembly, monomer. Dimer. Oligomer. Calmodulin binding. Interacts with PDZD11. Interacts with SLC35G1 and STIM1. Interacts with YWHAE; interacts with the monomeric and dimeric forms of the YWHAE but prefer the monomer form; this interaction inhibits calcium-transporting ATPase activity. Interacts with NPTN; this interaction stabilizes ATP2B1 and increases ATPase activity; this interaction controls T cell calcium homeostasis following T cell activation. Interacts with EPB41; regulates small intestinal calcium absorption through regulation of membrane expression of ATP2B1. As to expression, isoform B is ubiquitously expressed. Isoforms A and E have only been found in brain cortex. Isoform C is found in brain cortex, skeletal muscle and heart muscle. Isoform D has only been found in fetal skeletal muscle. Isoform K has been found in small intestine and liver. Isoform B is expressed in hair cells of inner ear.

The protein resides in the cell membrane. It localises to the basolateral cell membrane. It is found in the synapse. Its subcellular location is the presynaptic cell membrane. The protein localises to the cytoplasmic vesicle. The protein resides in the secretory vesicle. It localises to the synaptic vesicle membrane. The catalysed reaction is Ca(2+)(in) + ATP + H2O = Ca(2+)(out) + ADP + phosphate + H(+). Catalyzes the hydrolysis of ATP coupled with the transport of calcium from the cytoplasm to the extracellular space thereby maintaining intracellular calcium homeostasis. Plays a role in blood pressure regulation through regulation of intracellular calcium concentration and nitric oxide production leading to regulation of vascular smooth muscle cells vasoconstriction. Positively regulates bone mineralization through absorption of calcium from the intestine. Plays dual roles in osteoclast differentiation and survival by regulating RANKL-induced calcium oscillations in preosteoclasts and mediating calcium extrusion in mature osteoclasts. Regulates insulin sensitivity through calcium/calmodulin signaling pathway by regulating AKT1 activation and NOS3 activation in endothelial cells. May play a role in synaptic transmission by modulating calcium and proton dynamics at the synaptic vesicles. The protein is Plasma membrane calcium-transporting ATPase 1 of Rattus norvegicus (Rat).